Here is a 307-residue protein sequence, read N- to C-terminus: Protoheme IX farnesyltransferase (307 aa).

The next 9 membrane-spanning stretches (helical) occupy residues 29–49, 51–71, 101–120, 124–143, 151–171, 179–199, 218–238, 239–259, and 280–300; these read VISL…RGWP, LGLL…AGVF, AAIF…WVWA, AAWM…TLWL, IVLG…AVTG, FLFA…ALMI, RLTV…SVMP, VFLG…GWLL, and VAVP…VAGA.

This sequence belongs to the UbiA prenyltransferase family. Protoheme IX farnesyltransferase subfamily.

The protein localises to the cell membrane. The enzyme catalyses heme b + (2E,6E)-farnesyl diphosphate + H2O = Fe(II)-heme o + diphosphate. It functions in the pathway porphyrin-containing compound metabolism; heme O biosynthesis; heme O from protoheme: step 1/1. Converts heme B (protoheme IX) to heme O by substitution of the vinyl group on carbon 2 of heme B porphyrin ring with a hydroxyethyl farnesyl side group. This Deinococcus geothermalis (strain DSM 11300 / CIP 105573 / AG-3a) protein is Protoheme IX farnesyltransferase.